The sequence spans 397 residues: Presenilin-like protein At2g29900 (397 aa).

Topologically, residues 1-17 (MDRNQRPRSILDSLGEE) are cytoplasmic. Residues 18-38 (LIAILTPVSICMFTVVLLVCI) traverse the membrane as a helical segment. The Lumenal portion of the chain corresponds to 39-76 (LNSDPSSSSASFSSIATAAYSESDSDSSWDKFVGALLN). A helical membrane pass occupies residues 77 to 97 (SVVFVAAITVATFVLVLLFYL). At 98 to 106 (RCVKFLKFY) the chain is on the cytoplasmic side. Residues 107–127 (MGFSAFIVLGNLGGEILVLLI) form a helical membrane-spanning segment. Topologically, residues 128–135 (DRFRFPID) are lumenal. The helical transmembrane segment at 136-156 (SITFLILLFNFSVVGVFAVFM) threads the bilayer. Residues 157 to 158 (SK) lie on the Cytoplasmic side of the membrane. Residues 159-179 (FSILITQGYLVWIGVLVAYFF) traverse the membrane as a helical segment. Residues 180 to 188 (TLLPEWTTW) are Lumenal-facing. The chain crosses the membrane as a helical span at residues 189-209 (VLLVALALYDIAAVLLPVGPL). Residue aspartate 198 is part of the active site. Residues 210–305 (RLLVEMAISR…NSETFLEGIG (96 aa)) lie on the Cytoplasmic side of the membrane. The helical transmembrane segment at 306–326 (LGSSGAIKLGLGDFIFYSVLV) threads the bilayer. Residue aspartate 318 is part of the active site. The Lumenal segment spans residues 327–336 (GRAAMYDLMT). The chain crosses the membrane as a helical span at residues 337 to 357 (VYACYLAIIAGLGITLMLLSV). Residues 358–366 (YQKALPALP) lie on the Cytoplasmic side of the membrane. A PAL motif is present at residues 363-365 (PAL). Positions 367–387 (VSIMLGVVFYFLARLLLEVFV) form an intramembrane region, helical. Over 388-397 (VQCSSNLVMF) the chain is Cytoplasmic.

The protein belongs to the peptidase A22A family. As to quaternary structure, homodimer. Probable component of the gamma-secretase complex, a complex composed of a presenilin homodimer, nicastrin, APH1 and PEN2.

The protein resides in the endoplasmic reticulum membrane. Its subcellular location is the golgi apparatus membrane. Functionally, probable subunit of the gamma-secretase complex, an endoprotease complex that catalyzes the intramembrane cleavage of integral membrane proteins such as Notch receptors. The chain is Presenilin-like protein At2g29900 from Arabidopsis thaliana (Mouse-ear cress).